A 35-amino-acid polypeptide reads, in one-letter code: Sorbin and SH3 domain-containing protein 1 (35 aa).

Residues 1-8 (LNRDDDSD) form the SoHo domain. Serine 15 is modified (phosphoserine). One can recognise an SH3 domain in the interval 22–35 (CDDGWFVGTSRRTK).

Interacts with the long isoform of AFDN and with VCL. AFDN and VCL bind to SORBS1 in a competitive manner and do not form a ternary complex. Interacts with ABL1, CBL, CBLB and INPPL1/SHIP2 through the third SH3 domain. Interaction with ABL1 occurs only after insulin stimulation while this has no effect on the interaction with INPPL1. Interacts with the insulin receptor but dissociates from it following insulin stimulation. Also interacts with SCA7, PTK2/FAK1 and flotillin. Interacts (via SH3 domain 2) with PXN. Interacts (via third SH3 domain) with the Ten-1 ICD form of TENM1; the interaction induces the translocation of SORBS1 to the nucleus. O-glycosylated.

It localises to the cell junction. Its subcellular location is the adherens junction. The protein localises to the cell membrane. The protein resides in the cytoplasm. It is found in the cytoskeleton. It localises to the focal adhesion. Its subcellular location is the nucleus. The protein localises to the nucleus matrix. In terms of biological role, plays a role in tyrosine phosphorylation of CBL by linking CBL to the insulin receptor. Required for insulin-stimulated glucose transport. Involved in formation of actin stress fibers and focal adhesions. The sequence is that of Sorbin and SH3 domain-containing protein 1 from Rattus norvegicus (Rat).